We begin with the raw amino-acid sequence, 375 residues long: Chaperone protein DnaJ (375 aa).

The J domain occupies 5 to 70 (DFYETLGVAK…QKRAAYDRYG (66 aa)). The segment at 136 to 214 (GKTAQIRVPT…CHGQGRVTEE (79 aa)) adopts a CR-type zinc-finger fold. Zn(2+)-binding residues include cysteine 149, cysteine 152, cysteine 166, cysteine 169, cysteine 188, cysteine 191, cysteine 202, and cysteine 205. CXXCXGXG motif repeat units follow at residues 149–156 (CDVCSGSG), 166–173 (CGTCQGTG), 188–195 (CPTCHGRG), and 202–209 (CPKCHGQG).

It belongs to the DnaJ family. Homodimer. The cofactor is Zn(2+).

The protein localises to the cytoplasm. Functionally, participates actively in the response to hyperosmotic and heat shock by preventing the aggregation of stress-denatured proteins and by disaggregating proteins, also in an autonomous, DnaK-independent fashion. Unfolded proteins bind initially to DnaJ; upon interaction with the DnaJ-bound protein, DnaK hydrolyzes its bound ATP, resulting in the formation of a stable complex. GrpE releases ADP from DnaK; ATP binding to DnaK triggers the release of the substrate protein, thus completing the reaction cycle. Several rounds of ATP-dependent interactions between DnaJ, DnaK and GrpE are required for fully efficient folding. Also involved, together with DnaK and GrpE, in the DNA replication of plasmids through activation of initiation proteins. The protein is Chaperone protein DnaJ of Rhizobium etli (strain ATCC 51251 / DSM 11541 / JCM 21823 / NBRC 15573 / CFN 42).